The following is a 394-amino-acid chain: Small RNA 2'-O-methyltransferase (394 aa).

Residues Asp-78 and Ser-114 each coordinate S-adenosyl-L-methionine. 4 residues coordinate Mg(2+): Glu-132, Glu-135, His-136, and His-181.

This sequence belongs to the methyltransferase superfamily. HEN1 family. Mg(2+) serves as cofactor.

It is found in the cytoplasm. The catalysed reaction is small RNA 3'-end nucleotide + S-adenosyl-L-methionine = small RNA 3'-end 2'-O-methylnucleotide + S-adenosyl-L-homocysteine + H(+). Functionally, methyltransferase that adds a 2'-O-methyl group at the 3'-end of piRNAs, a class of 24 to 30 nucleotide RNAs that are generated by a Dicer-independent mechanism and are primarily derived from transposons and other repeated sequence elements. This probably protects the 3'-end of piRNAs from uridylation activity and subsequent degradation. Stabilization of piRNAs is essential for gametogenesis. The chain is Small RNA 2'-O-methyltransferase (Henmt1) from Rattus norvegicus (Rat).